We begin with the raw amino-acid sequence, 455 residues long: E3 ubiquitin-protein ligase IPI1 (455 aa).

Positions 1–42 (MGAEEEEEPASAVGREGGGGGGGARAAGAGAGGDTADDDDSG) are disordered. Residues 15 to 33 (REGGGGGGGARAAGAGAGG) are compositionally biased toward gly residues. Residues 51–97 (CSICLDAVVAGGGDRSTARLQCGHEFHLDCIGSAFNAKGVMQCPNCR) form an RING-type; atypical zinc finger. 2 disordered regions span residues 286–311 (LDSD…SRIP) and 426–455 (QWIG…IPRM). The span at 433-442 (SPPPPPPPPA) shows a compositional bias: pro residues.

In terms of assembly, interacts with SPL14/IPA1.

The protein resides in the nucleus. The enzyme catalyses S-ubiquitinyl-[E2 ubiquitin-conjugating enzyme]-L-cysteine + [acceptor protein]-L-lysine = [E2 ubiquitin-conjugating enzyme]-L-cysteine + N(6)-ubiquitinyl-[acceptor protein]-L-lysine.. Its pathway is protein modification; protein ubiquitination. Functions as an E3 ligase that promotes polyubiquitination of SPL14/IPA1 for subsequent proteasomal degradation. Regulates plant architecture by modulating SPL14/IPA1 abundance. Promotes the degradation of SPL14/IPA1 in panicles, while it stabilizes SPL14/IPA1 in shoot apices. Ubiquitinates the SPL14/IPA1-mediated complex with 'Lys-48'-linked polyubiquitin in panicles and 'Lys-63'-linked polyubiquitin chains in the shoot apex. This is E3 ubiquitin-protein ligase IPI1 from Oryza sativa subsp. japonica (Rice).